The chain runs to 315 residues: T-box transcription factor tbx-8 (315 aa).

Residues 11–195 (EDQDKLWNLF…FNPFAKGFRE (185 aa)) constitute a DNA-binding region (T-box). The segment covering 193 to 203 (FREGSQSDRKR) has biased composition (basic and acidic residues). 2 disordered regions span residues 193–235 (FREG…SVSP) and 293–315 (PPPSLKNVKKEEQEDIEQEINVV). Residues 205–225 (SPSADDSTTDESSSQVSSPQP) show a composition bias toward low complexity. Residues 305-315 (QEDIEQEINVV) show a composition bias toward acidic residues.

It is found in the nucleus. Functionally, transcription factor. Involved in the control of early morphogenesis of the intestine, hypodermis and body-wall muscle. Involved in regulating expression of vab-7. Appears to have partially redundant function to tbx-9. In Caenorhabditis elegans, this protein is T-box transcription factor tbx-8 (tbx-8).